Here is a 298-residue protein sequence, read N- to C-terminus: NAD kinase (298 aa).

Residue aspartate 80 is the Proton acceptor of the active site. NAD(+) contacts are provided by residues 80-81 (DG), 154-155 (ND), arginine 182, aspartate 184, 195-200 (TAYALS), alanine 219, and glutamine 253.

Belongs to the NAD kinase family. The cofactor is a divalent metal cation.

The protein resides in the cytoplasm. The catalysed reaction is NAD(+) + ATP = ADP + NADP(+) + H(+). In terms of biological role, involved in the regulation of the intracellular balance of NAD and NADP, and is a key enzyme in the biosynthesis of NADP. Catalyzes specifically the phosphorylation on 2'-hydroxyl of the adenosine moiety of NAD to yield NADP. In Acidovorax sp. (strain JS42), this protein is NAD kinase.